The primary structure comprises 181 residues: MNPRRKSRLKVVVSIIFGVAVAAGLTLYALSQNIDLFYTPSEIVNGKNDDPDQKPEVGQRIRVGGMVVEGSVKRDDKTLKVEFEANDIGPSITVEYEGILPDLFREGQGIVAQGVLIEPTRLKATEVLAKHDENYMPPELGDKLKEQHGAAGISEADLKGTSARDKAEIERTLKTLQGEAN.

Residues 1-8 are Cytoplasmic-facing; it reads MNPRRKSR. A helical; Signal-anchor for type II membrane protein membrane pass occupies residues 9 to 29; it reads LKVVVSIIFGVAVAAGLTLYA. The Periplasmic portion of the chain corresponds to 30 to 181; the sequence is LSQNIDLFYT…TLKTLQGEAN (152 aa). H131 and Y135 together coordinate heme. 2 stretches are compositionally biased toward basic and acidic residues: residues 135-148 and 156-166; these read YMPP…KEQH and ADLKGTSARDK. The disordered stretch occupies residues 135-166; the sequence is YMPPELGDKLKEQHGAAGISEADLKGTSARDK.

It belongs to the CcmE/CycJ family.

It localises to the cell inner membrane. In terms of biological role, heme chaperone required for the biogenesis of c-type cytochromes. Transiently binds heme delivered by CcmC and transfers the heme to apo-cytochromes in a process facilitated by CcmF and CcmH. The sequence is that of Cytochrome c-type biogenesis protein CcmE from Actinobacillus pleuropneumoniae serotype 7 (strain AP76).